Consider the following 122-residue polypeptide: Large ribosomal subunit protein uL14 (122 aa).

The protein belongs to the universal ribosomal protein uL14 family. In terms of assembly, part of the 50S ribosomal subunit. Forms a cluster with proteins L3 and L19. In the 70S ribosome, L14 and L19 interact and together make contacts with the 16S rRNA in bridges B5 and B8.

Its function is as follows. Binds to 23S rRNA. Forms part of two intersubunit bridges in the 70S ribosome. This is Large ribosomal subunit protein uL14 from Rhizobium meliloti (strain 1021) (Ensifer meliloti).